A 304-amino-acid chain; its full sequence is Probable UDP-3-O-acylglucosamine N-acyltransferase 2, mitochondrial (304 aa).

The transit peptide at 1–47 directs the protein to the mitochondrion; the sequence is MAATLWRLYSKSICNSLQGIILNKPFIQKQLLLSSRTRSLSFSSDSQ. 159-161 contributes to the UDP-N-acetyl-alpha-D-glucosamine binding site; it reads FGF. Positions 209 and 213 each coordinate hexadecanoate. His-216 functions as the Proton acceptor in the catalytic mechanism. The UDP-N-acetyl-alpha-D-glucosamine site is built by Asn-217, Ser-235, and His-253.

Belongs to the transferase hexapeptide repeat family. LpxD subfamily. As to quaternary structure, homotrimer.

Its subcellular location is the mitochondrion. The catalysed reaction is a UDP-3-O-[(3R)-3-hydroxyacyl]-alpha-D-glucosamine + a (3R)-hydroxyacyl-[ACP] = a UDP-2-N,3-O-bis[(3R)-3-hydroxyacyl]-alpha-D-glucosamine + holo-[ACP] + H(+). It functions in the pathway glycolipid biosynthesis; lipid IV(A) biosynthesis; lipid IV(A) from (3R)-3-hydroxytetradecanoyl-[acyl-carrier-protein] and UDP-N-acetyl-alpha-D-glucosamine: step 3/6. Its function is as follows. Involved in the biosynthesis of lipid A, a phosphorylated glycolipid that in bacteria anchors the lipopolysaccharide to the outer membrane of the cell. Lipid A-like molecules in plants may serve as structural components of the outer membranes of mitochondria and/or chloroplasts, or may be involved in signal transduction or plant defense responses. The polypeptide is Probable UDP-3-O-acylglucosamine N-acyltransferase 2, mitochondrial (LPXD2) (Arabidopsis thaliana (Mouse-ear cress)).